We begin with the raw amino-acid sequence, 438 residues long: MLQIYNSLTRKKEFFKPDHPPQINIYVCGPTVYNHLHLGNTRPLIFFDTVKRYLEMLKFKVYYVVNITDIDDKIIETSLKNQVLEKDLANKYIKSFNNLLETLNIQTINFKPQATQYINSMILYIQTLLDQGFAYFTDQGIYFRVSKITDYGKLKKQDLSQLKQNVRKQLDPQKEFPGDFILWKKTSQGITYPSPWFAGRPGWHTECATMIEQLFKLPLDIHGGGTDLKFPHHENEIAQTHAHSHQKLANFFMHVERLDYQNQKMSKSLGNIIWCKDLLKQYNPCIIKFLILSTHYRKPINFSYDLMEQTQQKYKKITYFLTKNNFYLKVNHFFCQTLDQDIMQLFHQLMQDDFATHKVIDLMEQIIKRAHQTQILDKLSQFQNSLLLILNTLVIAIPFNKPTKKDLQTYFLWQDARKCRDFIQADILRKQLLDKGFI.

C28 is a binding site for Zn(2+). Residues 30-40 carry the 'HIGH' region motif; it reads PTVYNHLHLGN. Positions 207, 232, and 236 each coordinate Zn(2+). The short motif at 264 to 268 is the 'KMSKS' region element; the sequence is KMSKS. K267 provides a ligand contact to ATP.

Belongs to the class-I aminoacyl-tRNA synthetase family. In terms of assembly, monomer. Zn(2+) is required as a cofactor.

The protein resides in the cytoplasm. The catalysed reaction is tRNA(Cys) + L-cysteine + ATP = L-cysteinyl-tRNA(Cys) + AMP + diphosphate. This chain is Cysteine--tRNA ligase, found in Aster yellows witches'-broom phytoplasma (strain AYWB).